Here is a 104-residue protein sequence, read N- to C-terminus: Glutaredoxin-C15 (104 aa).

Positions 1 to 103 constitute a Glutaredoxin domain; it reads MERVAKLSTE…PMLKAAGAIW (103 aa). Cysteine 21 and cysteine 24 are oxidised to a cystine.

The protein belongs to the glutaredoxin family. CC-type subfamily.

It is found in the cytoplasm. In terms of biological role, has a glutathione-disulfide oxidoreductase activity in the presence of NADPH and glutathione reductase. Reduces low molecular weight disulfides and proteins. The polypeptide is Glutaredoxin-C15 (GRXC15) (Oryza sativa subsp. japonica (Rice)).